Consider the following 198-residue polypeptide: Holliday junction branch migration complex subunit RuvA (198 aa).

The domain I stretch occupies residues 1–64; it reads MYEYIKGEYM…EDFIGLYGFE (64 aa). The interval 65–143 is domain II; it reads SLEELEMFKM…TDELLNCIDE (79 aa). The tract at residues 144–154 is flexible linker; sequence FDDVTQDNSLA. Residues 154–198 form a domain III region; that stretch reads AVSEALSALISLGYTEKEAEKVLRDVDKSESVENIIKSALVKLMG.

The protein belongs to the RuvA family. As to quaternary structure, homotetramer. Forms an RuvA(8)-RuvB(12)-Holliday junction (HJ) complex. HJ DNA is sandwiched between 2 RuvA tetramers; dsDNA enters through RuvA and exits via RuvB. An RuvB hexamer assembles on each DNA strand where it exits the tetramer. Each RuvB hexamer is contacted by two RuvA subunits (via domain III) on 2 adjacent RuvB subunits; this complex drives branch migration. In the full resolvosome a probable DNA-RuvA(4)-RuvB(12)-RuvC(2) complex forms which resolves the HJ.

It localises to the cytoplasm. Functionally, the RuvA-RuvB-RuvC complex processes Holliday junction (HJ) DNA during genetic recombination and DNA repair, while the RuvA-RuvB complex plays an important role in the rescue of blocked DNA replication forks via replication fork reversal (RFR). RuvA specifically binds to HJ cruciform DNA, conferring on it an open structure. The RuvB hexamer acts as an ATP-dependent pump, pulling dsDNA into and through the RuvAB complex. HJ branch migration allows RuvC to scan DNA until it finds its consensus sequence, where it cleaves and resolves the cruciform DNA. This Clostridium botulinum (strain Eklund 17B / Type B) protein is Holliday junction branch migration complex subunit RuvA.